We begin with the raw amino-acid sequence, 310 residues long: tRNA pseudouridine synthase B (310 aa).

Asp47 functions as the Nucleophile in the catalytic mechanism.

This sequence belongs to the pseudouridine synthase TruB family. Type 1 subfamily.

It carries out the reaction uridine(55) in tRNA = pseudouridine(55) in tRNA. Its function is as follows. Responsible for synthesis of pseudouridine from uracil-55 in the psi GC loop of transfer RNAs. This Caulobacter sp. (strain K31) protein is tRNA pseudouridine synthase B.